The chain runs to 151 residues: Internal scaffolding protein VP3 (151 aa).

Positions 120–151 (VETPQQAPQSTTNQTTTKPAPASGEPTPVPTP) are disordered. A compositionally biased stretch (polar residues) spans 122-137 (TPQQAPQSTTNQTTTK).

It belongs to the microvidae B protein family.

The protein localises to the host cytoplasm. In terms of biological role, participates in the assembly of the viral procapsid in the cytoplasm. Internal scaffolding protein VP3 is released from the procapsid upon genome packaging, possibly through affinity displacement by the protein VP8, or by proteolysis. This Bdellovibrio bacteriovorus (Bacteriophage phiMH2K) protein is Internal scaffolding protein VP3.